The chain runs to 273 residues: Dermonecrotic toxin LruSicTox-alphaIC1b (273 aa).

The active site involves His5. Residues Glu25 and Asp27 each contribute to the Mg(2+) site. His41 functions as the Nucleophile in the catalytic mechanism. Cystine bridges form between Cys45–Cys51 and Cys47–Cys190. Asp85 is a binding site for Mg(2+).

This sequence belongs to the arthropod phospholipase D family. Class II subfamily. Requires Mg(2+) as cofactor. Expressed by the venom gland.

Its subcellular location is the secreted. It carries out the reaction an N-(acyl)-sphingosylphosphocholine = an N-(acyl)-sphingosyl-1,3-cyclic phosphate + choline. It catalyses the reaction an N-(acyl)-sphingosylphosphoethanolamine = an N-(acyl)-sphingosyl-1,3-cyclic phosphate + ethanolamine. The enzyme catalyses a 1-acyl-sn-glycero-3-phosphocholine = a 1-acyl-sn-glycero-2,3-cyclic phosphate + choline. The catalysed reaction is a 1-acyl-sn-glycero-3-phosphoethanolamine = a 1-acyl-sn-glycero-2,3-cyclic phosphate + ethanolamine. In terms of biological role, dermonecrotic toxins cleave the phosphodiester linkage between the phosphate and headgroup of certain phospholipids (sphingolipid and lysolipid substrates), forming an alcohol (often choline) and a cyclic phosphate. This toxin acts on sphingomyelin (SM). It may also act on ceramide phosphoethanolamine (CPE), lysophosphatidylcholine (LPC) and lysophosphatidylethanolamine (LPE), but not on lysophosphatidylserine (LPS), and lysophosphatidylglycerol (LPG). It acts by transphosphatidylation, releasing exclusively cyclic phosphate products as second products. Induces dermonecrosis, hemolysis, increased vascular permeability, edema, inflammatory response, and platelet aggregation. The protein is Dermonecrotic toxin LruSicTox-alphaIC1b of Loxosceles rufescens (Mediterranean recluse spider).